The sequence spans 1167 residues: Rhoptry neck protein 2-like protein 2 (1167 aa).

The N-terminal stretch at 1-20 (MSSNLAFLSLSLAESTASLG) is a signal peptide. Residues 21 to 977 (KSLEETRTRL…WVAKRSRSRK (957 aa)) lie on the Cytoplasmic side of the membrane. A disordered region spans residues 55–94 (GPGLSVEGKQTEQMSRKSAEDTRASSLSSDPDDGRAAQLA). A compositionally biased stretch (basic and acidic residues) spans 68-77 (MSRKSAEDTR). The chain crosses the membrane as a helical span at residues 978-998 (LAIVSVLSLGLIFAYTLLSAL). The Extracellular segment spans residues 999-1167 (DIAQFLTDSG…TPQRAQDGSR (169 aa)). Residues Cys1015 and Cys1026 are joined by a disulfide bond.

This sequence belongs to the apicomplexan parasites RON2 family.

It localises to the secreted. Its subcellular location is the host cell membrane. In terms of biological role, may play a role in host cell invasion. The protein is Rhoptry neck protein 2-like protein 2 (RON2L2) of Toxoplasma gondii (strain ATCC 50611 / Me49).